A 213-amino-acid polypeptide reads, in one-letter code: Nucleoside triphosphate pyrophosphatase (213 aa).

The active-site Proton acceptor is the aspartate 79.

The protein belongs to the Maf family. It depends on a divalent metal cation as a cofactor.

The protein resides in the cytoplasm. The enzyme catalyses a ribonucleoside 5'-triphosphate + H2O = a ribonucleoside 5'-phosphate + diphosphate + H(+). It carries out the reaction a 2'-deoxyribonucleoside 5'-triphosphate + H2O = a 2'-deoxyribonucleoside 5'-phosphate + diphosphate + H(+). In terms of biological role, nucleoside triphosphate pyrophosphatase. May have a dual role in cell division arrest and in preventing the incorporation of modified nucleotides into cellular nucleic acids. In Mycobacterium leprae (strain Br4923), this protein is Nucleoside triphosphate pyrophosphatase.